The primary structure comprises 70 residues: Potassium channel toxin kappa-KTx 2.5 (70 aa).

A signal peptide spans 1 to 26 (MESSRKSYVLMLFLAFVIMNVCSVSG). Residues 27 to 42 (EPKDGEIAGFEMEEAR) constitute a propeptide that is removed on maturation. 2 disulfides stabilise this stretch: cysteine 46–cysteine 64 and cysteine 50–cysteine 60.

It belongs to the short scorpion toxin superfamily. Potassium channel inhibitor kappa-KTx family. Kappa-KTx 2 subfamily. As to expression, expressed by the venom gland.

Its subcellular location is the secreted. Voltage-independently blocks potassium currents on hKv1.1/KCNA1 (IC(50)=217 uM), and hKv1.4/KCNA4 (IC(50)=71 uM) (expressed in CHO cells). The chain is Potassium channel toxin kappa-KTx 2.5 from Opisthacanthus cayaporum (South American scorpion).